Here is a 494-residue protein sequence, read N- to C-terminus: Probable malate:quinone oxidoreductase 3 (494 aa).

This sequence belongs to the MQO family. Requires FAD as cofactor.

It catalyses the reaction (S)-malate + a quinone = a quinol + oxaloacetate. It functions in the pathway carbohydrate metabolism; tricarboxylic acid cycle; oxaloacetate from (S)-malate (quinone route): step 1/1. This Staphylococcus epidermidis (strain ATCC 12228 / FDA PCI 1200) protein is Probable malate:quinone oxidoreductase 3.